We begin with the raw amino-acid sequence, 149 residues long: MAAKVEPFWIRKTLEQLDQDEWESLCDGCGLCCLQKLEDEDDNSVYYTRIACKLLDLKTCQCSDYPNRRDSVPDCIQLTPGKADEFKWLPRTCGYRLVSEGKDLPLWHHLVCGDRDAVHHERISQSGRMLAEGSVAEEDWEDHLIFRAG.

The protein belongs to the UPF0260 family.

The chain is UPF0260 protein PFL_1499 from Pseudomonas fluorescens (strain ATCC BAA-477 / NRRL B-23932 / Pf-5).